Here is a 608-residue protein sequence, read N- to C-terminus: Preterminal protein (608 aa).

The Nuclear localization signal signature appears at 338-347; it reads RLPMRRRRRR. The tract at residues 342–377 is disordered; sequence RRRRRRAPPPPPMSEELSEPEVEAFPPASPPRRSFE. Residue S536 is modified to O-(5'-phospho-DNA)-serine.

The protein belongs to the adenoviridae terminal protein family. As to quaternary structure, heterodimer with the polymerase; this heterodimer binds to bp 9 to 18 of the genome. Interacts with host POU2F1; POU2F1 binds to the auxiliary sequences in the inverted terminal repeats and tethers the pTP-POL heterodimer to the origin DNA thereby participating in the assembly of the pre-initiation complex (POL-TP-DBP-NFIA-POU2F1). In terms of processing, preterminal protein is used to replicate viral genome, upon genomic encapsidation it is processed first into iTP and finally into TP by adenovirus protease.

It localises to the host nucleus matrix. Protein covalently bound to the viral DNA that acts as a primer for viral genomic replication by DNA strand displacement. Assembles on the viral origin of replication in an initiation complex with viral polymerase, DBP, host NFIA and host POU2F1/OCT1. During initiation, the polymerase covalently couples the first dCTP with Ser-580 of pTP. The terminal protein stimulates the template activity over 20 fold compared to protein-free templates. Neo-synthesized viral genomes are linked to two preterminal proteins, one for each 5' end. These new genomes are encapsidated in the nucleus, and during capsid maturation by viral protease, preterminal protein is first cleaved into intermediary (iTP), then into mature TP. May play a role in host nuclear matrix localization of genomic DNA. This chain is Preterminal protein, found in Canine adenovirus serotype 1 (strain CLL) (CAdV-1).